We begin with the raw amino-acid sequence, 456 residues long: Adenylosuccinate lyase (456 aa).

N(6)-(1,2-dicarboxyethyl)-AMP contacts are provided by residues 15-16 (RY), 90-92 (NHD), and 122-123 (TS). Catalysis depends on His171, which acts as the Proton donor/acceptor. Residue Gln247 participates in N(6)-(1,2-dicarboxyethyl)-AMP binding. Ser295 (proton donor/acceptor) is an active-site residue. Residues Ser296, 301–303 (KIN), Asn309, Arg335, and 340–344 (STVLR) contribute to the N(6)-(1,2-dicarboxyethyl)-AMP site.

This sequence belongs to the lyase 1 family. Adenylosuccinate lyase subfamily. As to quaternary structure, homotetramer. Residues from neighboring subunits contribute catalytic and substrate-binding residues to each active site.

It carries out the reaction N(6)-(1,2-dicarboxyethyl)-AMP = fumarate + AMP. The catalysed reaction is (2S)-2-[5-amino-1-(5-phospho-beta-D-ribosyl)imidazole-4-carboxamido]succinate = 5-amino-1-(5-phospho-beta-D-ribosyl)imidazole-4-carboxamide + fumarate. Its pathway is purine metabolism; AMP biosynthesis via de novo pathway; AMP from IMP: step 2/2. It functions in the pathway purine metabolism; IMP biosynthesis via de novo pathway; 5-amino-1-(5-phospho-D-ribosyl)imidazole-4-carboxamide from 5-amino-1-(5-phospho-D-ribosyl)imidazole-4-carboxylate: step 2/2. Its function is as follows. Catalyzes two reactions in de novo purine nucleotide biosynthesis. Catalyzes the breakdown of 5-aminoimidazole- (N-succinylocarboxamide) ribotide (SAICAR or 2-[5-amino-1-(5-phospho-beta-D-ribosyl)imidazole-4-carboxamido]succinate) to 5-aminoimidazole-4-carboxamide ribotide (AICAR or 5-amino-1-(5-phospho-beta-D-ribosyl)imidazole-4-carboxamide) and fumarate, and of adenylosuccinate (ADS or N(6)-(1,2-dicarboxyethyl)-AMP) to adenosine monophosphate (AMP) and fumarate. This Buchnera aphidicola subsp. Schizaphis graminum (strain Sg) protein is Adenylosuccinate lyase (purB).